Consider the following 375-residue polypeptide: ATP phosphoribosyltransferase regulatory subunit (375 aa).

This sequence belongs to the class-II aminoacyl-tRNA synthetase family. HisZ subfamily. In terms of assembly, heteromultimer composed of HisG and HisZ subunits.

Its subcellular location is the cytoplasm. It functions in the pathway amino-acid biosynthesis; L-histidine biosynthesis; L-histidine from 5-phospho-alpha-D-ribose 1-diphosphate: step 1/9. In terms of biological role, required for the first step of histidine biosynthesis. May allow the feedback regulation of ATP phosphoribosyltransferase activity by histidine. The chain is ATP phosphoribosyltransferase regulatory subunit from Agrobacterium fabrum (strain C58 / ATCC 33970) (Agrobacterium tumefaciens (strain C58)).